The sequence spans 77 residues: Translational regulator CsrA (77 aa).

It belongs to the CsrA/RsmA family. Homodimer; the beta-strands of each monomer intercalate to form a hydrophobic core, while the alpha-helices form wings that extend away from the core.

The protein localises to the cytoplasm. Its function is as follows. A translational regulator that binds mRNA to regulate translation initiation and/or mRNA stability. Usually binds in the 5'-UTR at or near the Shine-Dalgarno sequence preventing ribosome-binding, thus repressing translation. Its main target seems to be the major flagellin gene, while its function is anatagonized by FliW. This chain is Translational regulator CsrA, found in Desulfitobacterium hafniense (strain DSM 10664 / DCB-2).